Reading from the N-terminus, the 147-residue chain is 3-dehydroquinate dehydratase (147 aa).

The Proton acceptor role is filled by Tyr-23. Substrate is bound by residues Asn-75, His-81, and Asp-88. His-101 functions as the Proton donor in the catalytic mechanism. Substrate is bound by residues Leu-102–Ser-103 and Arg-112.

The protein belongs to the type-II 3-dehydroquinase family. Homododecamer.

The enzyme catalyses 3-dehydroquinate = 3-dehydroshikimate + H2O. It functions in the pathway metabolic intermediate biosynthesis; chorismate biosynthesis; chorismate from D-erythrose 4-phosphate and phosphoenolpyruvate: step 3/7. Its function is as follows. Catalyzes a trans-dehydration via an enolate intermediate. The polypeptide is 3-dehydroquinate dehydratase (Hahella chejuensis (strain KCTC 2396)).